Here is a 308-residue protein sequence, read N- to C-terminus: Aspartate carbamoyltransferase catalytic subunit (308 aa).

Carbamoyl phosphate is bound by residues arginine 57 and threonine 58. Position 86 (lysine 86) interacts with L-aspartate. Carbamoyl phosphate-binding residues include arginine 107, histidine 135, and glutamine 138. L-aspartate-binding residues include arginine 168 and arginine 229. Carbamoyl phosphate-binding residues include leucine 268 and proline 269.

Belongs to the aspartate/ornithine carbamoyltransferase superfamily. ATCase family. As to quaternary structure, heterooligomer of catalytic and regulatory chains.

It catalyses the reaction carbamoyl phosphate + L-aspartate = N-carbamoyl-L-aspartate + phosphate + H(+). Its pathway is pyrimidine metabolism; UMP biosynthesis via de novo pathway; (S)-dihydroorotate from bicarbonate: step 2/3. Catalyzes the condensation of carbamoyl phosphate and aspartate to form carbamoyl aspartate and inorganic phosphate, the committed step in the de novo pyrimidine nucleotide biosynthesis pathway. The polypeptide is Aspartate carbamoyltransferase catalytic subunit (Pyrococcus horikoshii (strain ATCC 700860 / DSM 12428 / JCM 9974 / NBRC 100139 / OT-3)).